The following is a 475-amino-acid chain: Arginine biosynthesis bifunctional protein ArgJ 1, mitochondrial (475 aa).

Substrate-binding residues include Thr204, Lys233, Thr244, Glu331, Asn470, and Thr475. The Nucleophile role is filled by Thr244.

It belongs to the ArgJ family. In terms of assembly, heterodimer of an alpha and a beta chain. In terms of processing, the alpha and beta chains are autoproteolytically processed from a single precursor protein within the mitochondrion.

It localises to the mitochondrion matrix. It catalyses the reaction N(2)-acetyl-L-ornithine + L-glutamate = N-acetyl-L-glutamate + L-ornithine. The enzyme catalyses L-glutamate + acetyl-CoA = N-acetyl-L-glutamate + CoA + H(+). Its pathway is amino-acid biosynthesis; L-arginine biosynthesis; L-ornithine and N-acetyl-L-glutamate from L-glutamate and N(2)-acetyl-L-ornithine (cyclic): step 1/1. It functions in the pathway amino-acid biosynthesis; L-arginine biosynthesis; N(2)-acetyl-L-ornithine from L-glutamate: step 1/4. Functionally, catalyzes two activities which are involved in the cyclic version of arginine biosynthesis: the synthesis of acetylglutamate from glutamate and acetyl-CoA, and of ornithine by transacetylation between acetylornithine and glutamate. The sequence is that of Arginine biosynthesis bifunctional protein ArgJ 1, mitochondrial from Botryotinia fuckeliana (strain B05.10) (Noble rot fungus).